A 126-amino-acid chain; its full sequence is MAANDATSSEEGQVFGCHKVEEWNEYFKKGVETKKLVVVDFTASWCGPCRFIAPILADIAKKMPHVIFLKVDVDELKTVSAEWSVEAMPTFVFIKDGKEVDRVVGAKKEELQQTIVKHAAPATVTA.

Positions 2 to 120 constitute a Thioredoxin domain; it reads AANDATSSEE…LQQTIVKHAA (119 aa). Active-site nucleophile residues include Cys46 and Cys49. A disulfide bond links Cys46 and Cys49.

Belongs to the thioredoxin family. Plant H-type subfamily.

The protein resides in the cytoplasm. In terms of biological role, participates in various redox reactions through the reversible oxidation of the active center dithiol to a disulfide. The H form is known to activate a number of cytosolic enzymes. The protein is Thioredoxin H-type 1 of Nicotiana tabacum (Common tobacco).